The sequence spans 241 residues: 2,3-bisphosphoglycerate-dependent phosphoglycerate mutase (241 aa).

Catalysis depends on histidine 12, which acts as the Tele-phosphohistidine intermediate. Substrate-binding positions include serine 24–glycine 25, arginine 61, glutamate 117–tyrosine 120, and lysine 128. Glutamate 117 serves as the catalytic Proton donor/acceptor.

This sequence belongs to the phosphoglycerate mutase family. BPG-dependent PGAM subfamily.

It carries out the reaction (2R)-2-phosphoglycerate = (2R)-3-phosphoglycerate. Its pathway is carbohydrate degradation; glycolysis; pyruvate from D-glyceraldehyde 3-phosphate: step 3/5. Catalyzes the interconversion of 2-phosphoglycerate and 3-phosphoglycerate. This Methanosarcina mazei (strain ATCC BAA-159 / DSM 3647 / Goe1 / Go1 / JCM 11833 / OCM 88) (Methanosarcina frisia) protein is 2,3-bisphosphoglycerate-dependent phosphoglycerate mutase.